The chain runs to 131 residues: Cytochrome b5 (131 aa).

One can recognise a Cytochrome b5 heme-binding domain in the interval 3–79 (AKIFSLDEVS…LEEYLIGSLD (77 aa)). 2 residues coordinate heme: histidine 38 and histidine 62. Residues 108 to 125 (IILPALAIIGALVYKYVI) traverse the membrane as a helical segment.

Belongs to the cytochrome b5 family.

It localises to the endoplasmic reticulum membrane. The protein resides in the microsome membrane. In terms of biological role, membrane bound hemoprotein which function as an electron carrier for several membrane bound oxygenases. This chain is Cytochrome b5, found in Rhizopus stolonifer (Rhizopus nigricans).